Consider the following 49-residue polypeptide: DNA-directed RNA polymerase subunit Rpo12 (49 aa).

Cys11, Cys27, and Cys30 together coordinate Zn(2+).

The protein belongs to the archaeal Rpo12/eukaryotic RPC10 RNA polymerase subunit family. In terms of assembly, part of the RNA polymerase complex. Zn(2+) is required as a cofactor.

The protein resides in the cytoplasm. It catalyses the reaction RNA(n) + a ribonucleoside 5'-triphosphate = RNA(n+1) + diphosphate. Its function is as follows. DNA-dependent RNA polymerase (RNAP) catalyzes the transcription of DNA into RNA using the four ribonucleoside triphosphates as substrates. The polypeptide is DNA-directed RNA polymerase subunit Rpo12 (Thermococcus onnurineus (strain NA1)).